The chain runs to 646 residues: Type III restriction-modification enzyme EcoPI Mod subunit (646 aa).

Residues 123-126 (DPPY) are binding of S-adenosyl methionine.

The protein belongs to the N(4)/N(6)-methyltransferase family. In terms of assembly, homodimer. A heterotetramer with stoichiometry Res(2)Mod(2).

It catalyses the reaction a 2'-deoxyadenosine in DNA + S-adenosyl-L-methionine = an N(6)-methyl-2'-deoxyadenosine in DNA + S-adenosyl-L-homocysteine + H(+). In terms of biological role, a beta subtype methylase that binds the system-specific DNA recognition site 5'-AGACC-3' and methylates A-3 (of only 1 strand as the other does not have an A residue). DNA restriction requires both the Res and Mod subunits. The sequence is that of Type III restriction-modification enzyme EcoPI Mod subunit from Enterobacteriaceae (Bacteriophage P1).